Reading from the N-terminus, the 365-residue chain is Peptide chain release factor 2 (365 aa).

An N5-methylglutamine modification is found at Gln252.

The protein belongs to the prokaryotic/mitochondrial release factor family. In terms of processing, methylated by PrmC. Methylation increases the termination efficiency of RF2.

Its subcellular location is the cytoplasm. Functionally, peptide chain release factor 2 directs the termination of translation in response to the peptide chain termination codons UGA and UAA. In Pseudoalteromonas translucida (strain TAC 125), this protein is Peptide chain release factor 2.